The chain runs to 612 residues: Mineralocorticoid receptor (612 aa).

The modulating stretch occupies residues 1–228 (GNEIADSTVS…STGPSRPSKV (228 aa)). Zn(2+) is bound by residues C229, C232, C246, C249, C269, C275, C285, and C288. 2 consecutive NR C4-type zinc fingers follow at residues 229–249 (CLVC…CGSC) and 269–293 (CAGR…LQKC). Residues 229 to 298 (CLVCGDEASG…RLQKCLQAGM (70 aa)) constitute a DNA-binding region (nuclear receptor). A hinge region spans residues 299 to 349 (NLGARKSKKLGKLKGVHEEHPQQPLQQTPTASPKEDTTLTSSSKEPSANSN). The tract at residues 310–348 (KLKGVHEEHPQQPLQQTPTASPKEDTTLTSSSKEPSANS) is disordered. Low complexity predominate over residues 339–348 (SSSKEPSANS). Residues 350 to 592 (SLVPLISAVS…EFPAMLVEII (243 aa)) form the NR LBD domain. 21-hydroxyprogesterone-binding residues include N398 and Q404. Residues N398 and Q404 each contribute to the aldosterone site. N398 and Q404 together coordinate progesterone. Residues 410–413 (KWAK) form an important for coactivator binding region. 21-hydroxyprogesterone-binding residues include R445 and T573. The aldosterone site is built by R445 and T573. Positions 445 and 573 each coordinate progesterone.

This sequence belongs to the nuclear hormone receptor family. NR3 subfamily.

The protein localises to the cytoplasm. It localises to the nucleus. In terms of biological role, receptor for both mineralocorticoids (MC) such as aldosterone and glucocorticoids (GC) such as corticosterone or cortisol. Binds to mineralocorticoid response elements (MRE) and transactivates target genes. The effect of MC is to increase ion and water transport and thus raise extracellular fluid volume and blood pressure and lower potassium levels. This is Mineralocorticoid receptor (nr3c2) from Xenopus laevis (African clawed frog).